A 67-amino-acid chain; its full sequence is U-myrmeciitoxin(01)-Mg4a (67 aa).

Positions 1–25 (MGKVFFFVLMIAIIGSTFLIEEALG) are cleaved as a signal peptide.

Belongs to the ant myrmeciitoxin-01 family. In terms of assembly, homodimer; disulfide-linked. Contains 2 intrachain disulfide bonds (one per chain) and 1 interchain disulfide bond. In terms of tissue distribution, expressed by the venom gland.

The protein resides in the secreted. The polypeptide is U-myrmeciitoxin(01)-Mg4a (Myrmecia gulosa (Red bulldog ant)).